The chain runs to 310 residues: Translocator protein BipD (310 aa).

Coiled-coil stretches lie at residues 127-171 and 250-299; these read DPIL…LQDY and DTAR…AIST.

The protein belongs to the invasin protein D family.

Its subcellular location is the secreted. Functionally, required for invasion of epithelial cells, as well as for survival within host cells, escape from endocytic vesicles and subsequent actin-tail formation. Probably regulates the secretion of effectors BipB and BipC and their final integration into the target cell membrane. This Burkholderia pseudomallei (strain 1106a) protein is Translocator protein BipD (bipD).